Reading from the N-terminus, the 271-residue chain is NADPH-dependent 7-cyano-7-deazaguanine reductase (271 aa).

81–83 is a substrate binding site; that stretch reads IES. Position 83–84 (83–84) interacts with NADPH; sequence SK. Residue Cys-177 is the Thioimide intermediate of the active site. The active-site Proton donor is the Asp-184. A substrate-binding site is contributed by 216–217; sequence HE. 245 to 246 serves as a coordination point for NADPH; that stretch reads RG.

It belongs to the GTP cyclohydrolase I family. QueF type 2 subfamily. Homodimer.

It localises to the cytoplasm. It catalyses the reaction 7-aminomethyl-7-carbaguanine + 2 NADP(+) = 7-cyano-7-deazaguanine + 2 NADPH + 3 H(+). Its pathway is tRNA modification; tRNA-queuosine biosynthesis. Functionally, catalyzes the NADPH-dependent reduction of 7-cyano-7-deazaguanine (preQ0) to 7-aminomethyl-7-deazaguanine (preQ1). The sequence is that of NADPH-dependent 7-cyano-7-deazaguanine reductase from Xanthomonas campestris pv. campestris (strain B100).